The sequence spans 198 residues: Peptidyl-tRNA hydrolase (198 aa).

Tyr-16 is a binding site for tRNA. His-21 serves as the catalytic Proton acceptor. Residues Tyr-67, Asn-69, and Asn-115 each contribute to the tRNA site.

This sequence belongs to the PTH family. In terms of assembly, monomer.

The protein resides in the cytoplasm. The catalysed reaction is an N-acyl-L-alpha-aminoacyl-tRNA + H2O = an N-acyl-L-amino acid + a tRNA + H(+). Its function is as follows. Hydrolyzes ribosome-free peptidyl-tRNAs (with 1 or more amino acids incorporated), which drop off the ribosome during protein synthesis, or as a result of ribosome stalling. In terms of biological role, catalyzes the release of premature peptidyl moieties from peptidyl-tRNA molecules trapped in stalled 50S ribosomal subunits, and thus maintains levels of free tRNAs and 50S ribosomes. In Gloeobacter violaceus (strain ATCC 29082 / PCC 7421), this protein is Peptidyl-tRNA hydrolase.